A 183-amino-acid chain; its full sequence is Phosphinothricin N-acetyltransferase (183 aa).

An N-acetyltransferase domain is found at 8 to 169 (VEIRPATAAD…DVGFWQRDFE (162 aa)). Acetyl-CoA is bound by residues 91–93 (VYV), 99–104 (RLGLGS), and Asn-130.

The protein belongs to the acetyltransferase family. PAT/BAR subfamily.

It catalyses the reaction phosphinothricin + acetyl-CoA = N-acetylphosphinothricin + CoA + H(+). Inactivates phosphinothricin (PPT) by transfer of an acetyl group from acetyl CoA. This enzyme is an effector of phosphinothricin tripeptide (PTT or bialaphos) resistance. This chain is Phosphinothricin N-acetyltransferase, found in Streptomyces viridochromogenes (strain DSM 40736 / JCM 4977 / BCRC 1201 / Tue 494).